Here is a 468-residue protein sequence, read N- to C-terminus: 3-isopropylmalate dehydratase large subunit (468 aa).

3 residues coordinate [4Fe-4S] cluster: Cys349, Cys409, and Cys412.

Belongs to the aconitase/IPM isomerase family. LeuC type 1 subfamily. In terms of assembly, heterodimer of LeuC and LeuD. [4Fe-4S] cluster is required as a cofactor.

It carries out the reaction (2R,3S)-3-isopropylmalate = (2S)-2-isopropylmalate. The protein operates within amino-acid biosynthesis; L-leucine biosynthesis; L-leucine from 3-methyl-2-oxobutanoate: step 2/4. In terms of biological role, catalyzes the isomerization between 2-isopropylmalate and 3-isopropylmalate, via the formation of 2-isopropylmaleate. The sequence is that of 3-isopropylmalate dehydratase large subunit from Shewanella baltica (strain OS155 / ATCC BAA-1091).